The following is a 230-amino-acid chain: Increased recombination centers protein 19 (230 aa).

It belongs to the IRC19 family.

Involved in sporulation and maintenance of the mitochondrial DNA. Is probably involved in a pathway contributing to genomic integrity. The chain is Increased recombination centers protein 19 (IRC19) from Saccharomyces cerevisiae (strain ATCC 204508 / S288c) (Baker's yeast).